The following is a 163-amino-acid chain: Lipoprotein signal peptidase (163 aa).

Helical transmembrane passes span 9–29 (YLAIAIIVLLLDQLSKWSALS), 39–59 (VLPFMNWLLLFNPGTAFSFLA), 67–87 (WFFTVLGLAASIYIIWMLYKS), and 92–112 (LLCIALSLILGGALGNVLDRV). Active-site residues include Asp119 and Asp137. The helical transmembrane segment at 130 to 150 (WPAFNIADSAICVGAALIIWG) threads the bilayer.

Belongs to the peptidase A8 family.

It localises to the cell inner membrane. The catalysed reaction is Release of signal peptides from bacterial membrane prolipoproteins. Hydrolyzes -Xaa-Yaa-Zaa-|-(S,diacylglyceryl)Cys-, in which Xaa is hydrophobic (preferably Leu), and Yaa (Ala or Ser) and Zaa (Gly or Ala) have small, neutral side chains.. The protein operates within protein modification; lipoprotein biosynthesis (signal peptide cleavage). Functionally, this protein specifically catalyzes the removal of signal peptides from prolipoproteins. The protein is Lipoprotein signal peptidase of Polynucleobacter necessarius subsp. necessarius (strain STIR1).